A 417-amino-acid chain; its full sequence is MSTVQQAYELAKKQFADIGVDTEQALALLDQLPISMHCWQGDDVSGFEQGAGALSGGIQTTGNYPGKARTPQELRADLDKAVSLIPGKKRLNLHASYLEADHRVDRNEVKPEHFANWVAWAKANNMGLDFNPTYFSHPLSAEATLSHQNKEIRDFWIEHGKACRKISEYFGKELGTASVMNIWIPDGSKDFVVDKFAPRQRLVEALDEIIAEKIDAKYHLDAVESKLFGIGVESYTVGSNEFYAAYAVSRGTALCLDAGHFHPTEVISDKISAVMPFVQHLLLHVSRPVRWDSDHVVLLDDETQAIAGEIIRNQLFDRVHIGLDFFDASINRIAAWVIGTRNMQKALLRALLEPTDELRALENARDFGSRLALLEEQKSLPWQAVWDMYCERHNVPVGRRWLDEVRAYEKTVLSQRV.

The Mn(2+) site is built by H260, D292, and D294.

The protein belongs to the rhamnose isomerase family. Mn(2+) serves as cofactor.

It is found in the cytoplasm. The enzyme catalyses L-rhamnopyranose = L-rhamnulose. The protein operates within carbohydrate degradation; L-rhamnose degradation; glycerone phosphate from L-rhamnose: step 1/3. Catalyzes the interconversion of L-rhamnose and L-rhamnulose. This is L-rhamnose isomerase from Mannheimia succiniciproducens (strain KCTC 0769BP / MBEL55E).